Here is a 249-residue protein sequence, read N- to C-terminus: Short-chain dehydrogenase virB (249 aa).

NADP(+)-binding residues include isoleucine 16, arginine 104, tyrosine 150, lysine 154, valine 183, and threonine 185. The Proton donor role is filled by tyrosine 150. The Lowers pKa of active site Tyr role is filled by lysine 154.

This sequence belongs to the short-chain dehydrogenases/reductases (SDR) family.

Its pathway is secondary metabolite biosynthesis. Short-chain dehydrogenase; part of the gene cluster that mediates the biosynthesis of virensols and trichoxide, fungal natural products that contain or are derived from a salicylaldehyde core. The pathway begins with the synthesis of the reduced chain in virensol C by the highly reducing polyketide synthase virA via condensation of one acetate and 8 malonate units. VirA has interesting programming rules since the first 2 ketides are fully reduced, the 3 following ketides undergo beta-dehydration, and the last 3 ketides are only reduced to beta-hydroxys to yield the trihydroxy portion. The production of aldehyde virensol C by virA alone is surprising, since virA does not contain a reductase (R) domain that is typically associated with reductive product release in HRPKS. The cupin-domain enzyme virC is involved in enhancing virA product turnover. The short-chain dehydrogenase virB then oxidizes the C-7 alcohol of virensol C to a ketone, yielding virensol D. Virensol D is further transformed to salicylaldehyde 5-deoxyaurocitrin by the short-chain dehydrogenase virD. VirD catalyzes the dehydrogenation of C-3 to form the beta-ketone aldehyde, which is followed by the generation of the nucleophilic C-2 that is required for the intramolecular aldol condensation between C-2 and C-7, itself followed by dehydration and aromatization which leads to salicylaldehyde 5-deoxyaurocitrin. While the dehydrogenation of virensol D is definitely catalyzed by virD, the aldol condensation and dehydration may be uncatalyzed or assisted by virD. The short chain dehydrogenase virG then converts salicylaldehyde 5-deoxyaurocitrin into virensol B which is further hydroxylated by the cytochrome P450 monooxygenase virE to yield the hydroquinone virensol A. VirI then may oxidize virensol A to form the quinone, while virH performs the epoxidation. Finally, the two remaining short-chain dehydrogenases, virK and virL, are probably responsible for reducing the ketones to the corresponding alcohols to furnish the epoxycyclohexanol structure in trichoxide. This Hypocrea virens (strain Gv29-8 / FGSC 10586) (Gliocladium virens) protein is Short-chain dehydrogenase virB.